A 297-amino-acid chain; its full sequence is Cbb3-type cytochrome c oxidase subunit CcoP (297 aa).

Residues 1-35 (MSKKPTTKKEVQTTGHQWDGIEELNTPLPRWWLWT) lie on the Cytoplasmic side of the membrane. Residues 36 to 56 (FYATIIWGVAYSIAMPAWPIF) form a helical membrane-spanning segment. The Periplasmic portion of the chain corresponds to 57–297 (SDKATPGLLG…SYVHSLGGGQ (241 aa)). Cytochrome c domains follow at residues 108–199 (YTRN…LQIS) and 206–294 (VKAT…HSLG). Heme c contacts are provided by cysteine 121, cysteine 124, histidine 125, methionine 174, cysteine 219, cysteine 222, histidine 223, and methionine 264.

Belongs to the CcoP / FixP family. Component of the cbb3-type cytochrome c oxidase at least composed of CcoN, CcoO, CcoQ and CcoP. Interacts with CcoQ. The cofactor is heme c.

The protein resides in the cell inner membrane. It participates in energy metabolism; oxidative phosphorylation. C-type cytochrome. Part of the cbb3-type cytochrome c oxidase complex. CcoP subunit is required for transferring electrons from donor cytochrome c via its heme groups to CcoO subunit. From there, electrons are shuttled to the catalytic binuclear center of CcoN subunit where oxygen reduction takes place. The complex also functions as a proton pump. This Rhodobacter capsulatus (Rhodopseudomonas capsulata) protein is Cbb3-type cytochrome c oxidase subunit CcoP.